We begin with the raw amino-acid sequence, 136 residues long: Mini-ribonuclease 3 (136 aa).

Aspartate 20 is an active-site residue.

It belongs to the MrnC RNase family. Homodimer. Requires Mg(2+) as cofactor.

The protein resides in the cytoplasm. Its function is as follows. Involved in correct processing of both the 5' and 3' ends of 23S rRNA precursor. Processes 30S rRNA precursor transcript even in absence of ribonuclease 3 (Rnc); Rnc processes 30S rRNA into smaller rRNA precursors. In Listeria monocytogenes serovar 1/2a (strain ATCC BAA-679 / EGD-e), this protein is Mini-ribonuclease 3.